The primary structure comprises 363 residues: MAP kinase kinase mkk-4 (363 aa).

The segment at 1-38 is disordered; the sequence is MVQEDDENLRNSMSLRPTSLSTRPTSLSVNGNEKTLPE. Low complexity predominate over residues 14 to 28; it reads SLRPTSLSTRPTSLS. A Protein kinase domain is found at 66 to 330; sequence LQDLGAIGNG…YDTLKSFDFY (265 aa). ATP is bound by residues 72–80 and lysine 95; that span reads IGNGNFGTV. Aspartate 194 (proton acceptor) is an active-site residue.

It belongs to the protein kinase superfamily. STE Ser/Thr protein kinase family. MAP kinase kinase subfamily. As to expression, expressed in the pharynx, including the corpus, isthmus and terminal bulb.

It is found in the cytoplasm. The enzyme catalyses L-seryl-[protein] + ATP = O-phospho-L-seryl-[protein] + ADP + H(+). The catalysed reaction is L-threonyl-[protein] + ATP = O-phospho-L-threonyl-[protein] + ADP + H(+). It carries out the reaction L-tyrosyl-[protein] + ATP = O-phospho-L-tyrosyl-[protein] + ADP + H(+). Functionally, activity is required in presynaptic neurons, in a dose-dependent manner, for normal presynaptic development and morphology. Plays a role in the formation of muscle connections, also called muscle arm extensions, between the body wall and the motor axons in the dorsal and ventral cord. The chain is MAP kinase kinase mkk-4 (mkk-4) from Caenorhabditis elegans.